Consider the following 493-residue polypeptide: Cysteine--tRNA ligase (493 aa).

Residue Cys31 coordinates Zn(2+). The 'HIGH' region signature appears at 33–43 (PTVYGDAHLGH). Cys226, His251, and Glu255 together coordinate Zn(2+). The 'KMSKS' region motif lies at 283–287 (KMGKS). Lys286 provides a ligand contact to ATP.

It belongs to the class-I aminoacyl-tRNA synthetase family. As to quaternary structure, monomer. It depends on Zn(2+) as a cofactor.

It localises to the cytoplasm. It carries out the reaction tRNA(Cys) + L-cysteine + ATP = L-cysteinyl-tRNA(Cys) + AMP + diphosphate. This Phocaeicola vulgatus (strain ATCC 8482 / DSM 1447 / JCM 5826 / CCUG 4940 / NBRC 14291 / NCTC 11154) (Bacteroides vulgatus) protein is Cysteine--tRNA ligase.